A 966-amino-acid chain; its full sequence is DNA mismatch repair protein MutS (966 aa).

709–716 (GPNMAGKS) contacts ATP. Positions 894-914 (EGQRPPSSPAQPPAPPAPVVV) are disordered. A compositionally biased stretch (pro residues) spans 899 to 912 (PSSPAQPPAPPAPV).

This sequence belongs to the DNA mismatch repair MutS family.

Its function is as follows. This protein is involved in the repair of mismatches in DNA. It is possible that it carries out the mismatch recognition step. This protein has a weak ATPase activity. The chain is DNA mismatch repair protein MutS from Chloroflexus aurantiacus (strain ATCC 29366 / DSM 635 / J-10-fl).